The sequence spans 379 residues: Cytochrome b (379 aa).

A run of 4 helical transmembrane segments spans residues 33–53, 77–98, 113–133, and 178–198; these read FGSL…FLAM, WTIR…FIHV, WNIG…GYVL, and FFAL…IHLL. Heme b contacts are provided by H83 and H97. The heme b site is built by H182 and H196. Residue H201 participates in a ubiquinone binding. A run of 4 helical transmembrane segments spans residues 226-246, 288-308, 320-340, and 347-367; these read TKDF…TLFY, LGGV…PFLQ, LSQF…WIGG, and FISI…FIMP.

This sequence belongs to the cytochrome b family. The cytochrome bc1 complex contains 11 subunits: 3 respiratory subunits (MT-CYB, CYC1 and UQCRFS1), 2 core proteins (UQCRC1 and UQCRC2) and 6 low-molecular weight proteins (UQCRH/QCR6, UQCRB/QCR7, UQCRQ/QCR8, UQCR10/QCR9, UQCR11/QCR10 and a cleavage product of UQCRFS1). This cytochrome bc1 complex then forms a dimer. Heme b is required as a cofactor.

Its subcellular location is the mitochondrion inner membrane. Component of the ubiquinol-cytochrome c reductase complex (complex III or cytochrome b-c1 complex) that is part of the mitochondrial respiratory chain. The b-c1 complex mediates electron transfer from ubiquinol to cytochrome c. Contributes to the generation of a proton gradient across the mitochondrial membrane that is then used for ATP synthesis. In Lepilemur randrianasoloi (Randrianasoli's sportive lemur), this protein is Cytochrome b (MT-CYB).